The sequence spans 211 residues: Ras-related protein RABB1c (211 aa).

Serine 2 is subject to N-acetylserine. Residue glycine 13–cysteine 21 coordinates GTP. The Effector region motif lies at histidine 35–phenylalanine 43. Residues aspartate 61–glutamine 65, asparagine 119–aspartate 122, and serine 149–lysine 151 contribute to the GTP site. S-geranylgeranyl cysteine attachment occurs at residues cysteine 209 and cysteine 210.

The protein belongs to the small GTPase superfamily. Rab family.

Its subcellular location is the cell membrane. In terms of biological role, intracellular vesicle trafficking and protein transport. This chain is Ras-related protein RABB1c (RABB1C), found in Arabidopsis thaliana (Mouse-ear cress).